A 553-amino-acid polypeptide reads, in one-letter code: Formate--tetrahydrofolate ligase (553 aa).

Position 62–69 (62–69) interacts with ATP; the sequence is TPAGEGKS.

Belongs to the formate--tetrahydrofolate ligase family.

The enzyme catalyses (6S)-5,6,7,8-tetrahydrofolate + formate + ATP = (6R)-10-formyltetrahydrofolate + ADP + phosphate. Its pathway is one-carbon metabolism; tetrahydrofolate interconversion. The polypeptide is Formate--tetrahydrofolate ligase (Limosilactobacillus reuteri subsp. reuteri (strain JCM 1112) (Lactobacillus reuteri)).